A 158-amino-acid polypeptide reads, in one-letter code: Heavy metal-associated isoprenylated plant protein 23 (158 aa).

In terms of domain architecture, HMA spans 31 to 94 (FQTVELKVRM…KAKATGKKAE (64 aa)). A metal cation-binding residues include Cys42 and Cys45. Cys155 carries the post-translational modification Cysteine methyl ester. Residue Cys155 is the site of S-farnesyl cysteine attachment. The propeptide at 156-158 (SIM) is removed in mature form.

The protein belongs to the HIPP family. As to quaternary structure, interacts with ZHD11/HB29.

Heavy-metal-binding protein. This Arabidopsis thaliana (Mouse-ear cress) protein is Heavy metal-associated isoprenylated plant protein 23.